The following is a 71-amino-acid chain: Large ribosomal subunit protein eL38 (71 aa).

Belongs to the eukaryotic ribosomal protein eL38 family.

The sequence is that of Large ribosomal subunit protein eL38 (RpL38) from Ixodes scapularis (Black-legged tick).